Here is a 1042-residue protein sequence, read N- to C-terminus: FHIP family protein AAEL005291 (1042 aa).

Over residues 1–14 (MSWLRSSPLRQSFS) the composition is skewed to polar residues. 4 disordered regions span residues 1–31 (MSWL…GGNS), 494–514 (NNTS…PQGG), 821–866 (PHSG…KRND), and 905–977 (SNSS…GSPH). Over residues 839–859 (VSMTSNLSQTTPMQLTPSSSY) the composition is skewed to polar residues. Composition is skewed to low complexity over residues 905–940 (SNSS…FMGS) and 956–976 (PSIG…TGSP).

Belongs to the FHIP family.

The chain is FHIP family protein AAEL005291 from Aedes aegypti (Yellowfever mosquito).